We begin with the raw amino-acid sequence, 268 residues long: 4-hydroxy-tetrahydrodipicolinate reductase (268 aa).

Residues 10–15 (GASGRM), Asp36, 99–101 (GTT), and 123–126 (APNM) each bind NAD(+). Residue His156 is the Proton donor/acceptor of the active site. His157 contacts (S)-2,3,4,5-tetrahydrodipicolinate. Lys160 serves as the catalytic Proton donor. 166 to 167 (GT) is a binding site for (S)-2,3,4,5-tetrahydrodipicolinate.

Belongs to the DapB family.

It localises to the cytoplasm. It carries out the reaction (S)-2,3,4,5-tetrahydrodipicolinate + NAD(+) + H2O = (2S,4S)-4-hydroxy-2,3,4,5-tetrahydrodipicolinate + NADH + H(+). The enzyme catalyses (S)-2,3,4,5-tetrahydrodipicolinate + NADP(+) + H2O = (2S,4S)-4-hydroxy-2,3,4,5-tetrahydrodipicolinate + NADPH + H(+). It functions in the pathway amino-acid biosynthesis; L-lysine biosynthesis via DAP pathway; (S)-tetrahydrodipicolinate from L-aspartate: step 4/4. Catalyzes the conversion of 4-hydroxy-tetrahydrodipicolinate (HTPA) to tetrahydrodipicolinate. This chain is 4-hydroxy-tetrahydrodipicolinate reductase, found in Herminiimonas arsenicoxydans.